Consider the following 122-residue polypeptide: MIQQESRLKVADNTGAKEILCIRVLGGSSRRYAGIGDIIVATVKDAIPGGNVKRGDVVKAVVVRTVKERRRPDGSYIKFDENAAVIIKPDNDPRGTRIFGPVGRELREKRFMKIISLAPEVL.

It belongs to the universal ribosomal protein uL14 family. In terms of assembly, part of the 50S ribosomal subunit. Forms a cluster with proteins L3 and L19. In the 70S ribosome, L14 and L19 interact and together make contacts with the 16S rRNA in bridges B5 and B8.

Functionally, binds to 23S rRNA. Forms part of two intersubunit bridges in the 70S ribosome. This is Large ribosomal subunit protein uL14 from Mycobacterium marinum (strain ATCC BAA-535 / M).